Reading from the N-terminus, the 396-residue chain is Acetate kinase (396 aa).

A Mg(2+)-binding site is contributed by Asn8. Lys15 contributes to the ATP binding site. Position 89 (Arg89) interacts with substrate. The Proton donor/acceptor role is filled by Asp146. ATP is bound by residues 206–210 (HLGNG), 281–283 (DLR), and 329–333 (GIGEN). Glu382 lines the Mg(2+) pocket.

The protein belongs to the acetokinase family. Homodimer. It depends on Mg(2+) as a cofactor. Requires Mn(2+) as cofactor.

It is found in the cytoplasm. The enzyme catalyses acetate + ATP = acetyl phosphate + ADP. Its pathway is metabolic intermediate biosynthesis; acetyl-CoA biosynthesis; acetyl-CoA from acetate: step 1/2. Catalyzes the formation of acetyl phosphate from acetate and ATP. Can also catalyze the reverse reaction. The polypeptide is Acetate kinase (Geobacillus kaustophilus (strain HTA426)).